Consider the following 439-residue polypeptide: GTPase Obg (439 aa).

The 159-residue stretch at 1–159 (MAFVDQAEIE…RKLKLELKVL (159 aa)) folds into the Obg domain. The 177-residue stretch at 160–336 (ADVGLVGFPS…LMRLTADLLA (177 aa)) folds into the OBG-type G domain. GTP contacts are provided by residues 166-173 (GFPSAGKS), 191-195 (FTTLS), 213-216 (DLPG), 283-286 (TKMD), and 317-319 (SAL). Residues Ser173 and Thr193 each contribute to the Mg(2+) site. One can recognise an OCT domain in the interval 358–439 (DFKPEQHNFT…NSDFVFEFSD (82 aa)).

It belongs to the TRAFAC class OBG-HflX-like GTPase superfamily. OBG GTPase family. Monomer. It depends on Mg(2+) as a cofactor.

The protein resides in the cytoplasm. An essential GTPase which binds GTP, GDP and possibly (p)ppGpp with moderate affinity, with high nucleotide exchange rates and a fairly low GTP hydrolysis rate. Plays a role in control of the cell cycle, stress response, ribosome biogenesis and in those bacteria that undergo differentiation, in morphogenesis control. The chain is GTPase Obg from Leuconostoc citreum (strain KM20).